An 86-amino-acid polypeptide reads, in one-letter code: Small ribosomal subunit protein bS20 (86 aa).

Belongs to the bacterial ribosomal protein bS20 family.

Binds directly to 16S ribosomal RNA. The protein is Small ribosomal subunit protein bS20 of Mycolicibacterium vanbaalenii (strain DSM 7251 / JCM 13017 / BCRC 16820 / KCTC 9966 / NRRL B-24157 / PYR-1) (Mycobacterium vanbaalenii).